We begin with the raw amino-acid sequence, 237 residues long: Probable aquaporin SIP2-1 (237 aa).

A run of 6 helical transmembrane segments spans residues 15–35 (FMWI…LGFS), 39–59 (PSGE…FAYL), 71–91 (LTAL…SVFV), 122–142 (VAIH…VLLS), 169–189 (ILGS…GWAY), and 202–222 (VYWL…KVVF). The short motif at 69–71 (NPL) is the NPA 1 element. The short motif at 180 to 182 (NPA) is the NPA 2 element.

It belongs to the MIP/aquaporin (TC 1.A.8) family. SIP (TC 1.A.8.10) subfamily. In terms of tissue distribution, expressed in dividing cells and elongating regions of the root tips, emerging lateral roots, root steles, cotyledons, main veins of the rosette leaves, vascular tissues of the flower petals, stigma, stamens (anthers and filaments), pollen and the top and bottom (receptacle) of siliques.

It localises to the endoplasmic reticulum membrane. Water channel required to facilitate the transport of water across cell membrane. Inactive in yeast cells. The polypeptide is Probable aquaporin SIP2-1 (SIP2-1) (Arabidopsis thaliana (Mouse-ear cress)).